The following is a 228-amino-acid chain: 7-cyano-7-deazaguanine synthase (228 aa).

11-21 (LSGGLDSATCL) contributes to the ATP binding site. Residues Cys-191, Cys-201, Cys-204, and Cys-207 each coordinate Zn(2+).

Belongs to the QueC family. The cofactor is Zn(2+).

The catalysed reaction is 7-carboxy-7-deazaguanine + NH4(+) + ATP = 7-cyano-7-deazaguanine + ADP + phosphate + H2O + H(+). It functions in the pathway purine metabolism; 7-cyano-7-deazaguanine biosynthesis. Catalyzes the ATP-dependent conversion of 7-carboxy-7-deazaguanine (CDG) to 7-cyano-7-deazaguanine (preQ(0)). This Azoarcus sp. (strain BH72) protein is 7-cyano-7-deazaguanine synthase.